Here is a 90-residue protein sequence, read N- to C-terminus: Small ribosomal subunit protein bS16 (90 aa).

Belongs to the bacterial ribosomal protein bS16 family.

This Lactococcus lactis subsp. lactis (strain IL1403) (Streptococcus lactis) protein is Small ribosomal subunit protein bS16.